A 333-amino-acid polypeptide reads, in one-letter code: Ketol-acid reductoisomerase (NADP(+)) (333 aa).

Residues 2–182 (AKIYYDEDAS…GATRAGVIET (181 aa)) form the KARI N-terminal Rossmann domain. NADP(+)-binding positions include 25–28 (YGSQ), serine 51, serine 53, and 83–86 (DTVQ). Residue histidine 108 is part of the active site. Glycine 134 is a binding site for NADP(+). The 145-residue stretch at 183–327 (TFKEETETDL…EELRKMMPWL (145 aa)) folds into the KARI C-terminal knotted domain. Mg(2+)-binding residues include aspartate 191, glutamate 195, glutamate 227, and glutamate 231. Serine 252 provides a ligand contact to substrate.

The protein belongs to the ketol-acid reductoisomerase family. Mg(2+) is required as a cofactor.

The enzyme catalyses (2R)-2,3-dihydroxy-3-methylbutanoate + NADP(+) = (2S)-2-acetolactate + NADPH + H(+). The catalysed reaction is (2R,3R)-2,3-dihydroxy-3-methylpentanoate + NADP(+) = (S)-2-ethyl-2-hydroxy-3-oxobutanoate + NADPH + H(+). It functions in the pathway amino-acid biosynthesis; L-isoleucine biosynthesis; L-isoleucine from 2-oxobutanoate: step 2/4. Its pathway is amino-acid biosynthesis; L-valine biosynthesis; L-valine from pyruvate: step 2/4. Involved in the biosynthesis of branched-chain amino acids (BCAA). Catalyzes an alkyl-migration followed by a ketol-acid reduction of (S)-2-acetolactate (S2AL) to yield (R)-2,3-dihydroxy-isovalerate. In the isomerase reaction, S2AL is rearranged via a Mg-dependent methyl migration to produce 3-hydroxy-3-methyl-2-ketobutyrate (HMKB). In the reductase reaction, this 2-ketoacid undergoes a metal-dependent reduction by NADPH to yield (R)-2,3-dihydroxy-isovalerate. In Aquifex aeolicus (strain VF5), this protein is Ketol-acid reductoisomerase (NADP(+)).